Here is a 134-residue protein sequence, read N- to C-terminus: Ribonuclease P protein component (134 aa).

Belongs to the RnpA family. As to quaternary structure, consists of a catalytic RNA component (M1 or rnpB) and a protein subunit.

It carries out the reaction Endonucleolytic cleavage of RNA, removing 5'-extranucleotides from tRNA precursor.. RNaseP catalyzes the removal of the 5'-leader sequence from pre-tRNA to produce the mature 5'-terminus. It can also cleave other RNA substrates such as 4.5S RNA. The protein component plays an auxiliary but essential role in vivo by binding to the 5'-leader sequence and broadening the substrate specificity of the ribozyme. This chain is Ribonuclease P protein component, found in Pseudomonas putida (strain GB-1).